Here is a 217-residue protein sequence, read N- to C-terminus: CLA biosynthesis enone reductase (217 aa).

The FMN site is built by Arg20, Ser22, and Arg24. Cys51 is a 10-oxooctadecanoate binding site. Residues Asn78 and Gln81 each contribute to the FMN site. Residue Arg118 participates in 10-oxooctadecanoate binding. FMN is bound by residues Asn165, Ser168, Gly169, and Arg206.

It belongs to the nitroreductase family. In terms of assembly, homodimer. FMN is required as a cofactor.

It catalyses the reaction 10-oxo-(11E)-octadecenoate + NADH + H(+) = 10-oxooctadecanoate + NAD(+). Its pathway is lipid metabolism; fatty acid metabolism. In terms of biological role, is involved in a saturation metabolic pathway of polyunsaturated fatty acids, that detoxifies unsaturated fatty acids and generates hydroxy fatty acids, oxo fatty acids, conjugated fatty acids such as conjugated linoleic acids (CLAs), and partially saturated trans-fatty acids as intermediates. CLA-ER catalyzes the saturation of the carbon-carbon double bond in 10-oxo-(11E)-octadecenoate to produce 10-oxooctadecanoate, during linoleate metabolism. As part of the gut microbiome, this enzyme modifies host fatty acid composition and is expected to improve human health by altering lipid metabolism related to the onset of metabolic syndrome. The chain is CLA biosynthesis enone reductase from Lactiplantibacillus plantarum (Lactobacillus plantarum).